The primary structure comprises 321 residues: Lipoyl synthase (321 aa).

7 residues coordinate [4Fe-4S] cluster: C68, C73, C79, C94, C98, C101, and S308. In terms of domain architecture, Radical SAM core spans 80-297 (FNHGTATFMI…KAEAMAMGFT (218 aa)).

Belongs to the radical SAM superfamily. Lipoyl synthase family. [4Fe-4S] cluster is required as a cofactor.

Its subcellular location is the cytoplasm. The enzyme catalyses [[Fe-S] cluster scaffold protein carrying a second [4Fe-4S](2+) cluster] + N(6)-octanoyl-L-lysyl-[protein] + 2 oxidized [2Fe-2S]-[ferredoxin] + 2 S-adenosyl-L-methionine + 4 H(+) = [[Fe-S] cluster scaffold protein] + N(6)-[(R)-dihydrolipoyl]-L-lysyl-[protein] + 4 Fe(3+) + 2 hydrogen sulfide + 2 5'-deoxyadenosine + 2 L-methionine + 2 reduced [2Fe-2S]-[ferredoxin]. The protein operates within protein modification; protein lipoylation via endogenous pathway; protein N(6)-(lipoyl)lysine from octanoyl-[acyl-carrier-protein]: step 2/2. In terms of biological role, catalyzes the radical-mediated insertion of two sulfur atoms into the C-6 and C-8 positions of the octanoyl moiety bound to the lipoyl domains of lipoate-dependent enzymes, thereby converting the octanoylated domains into lipoylated derivatives. The chain is Lipoyl synthase from Enterobacter sp. (strain 638).